The chain runs to 180 residues: UPF0227 protein YE1706 (180 aa).

Belongs to the UPF0227 family.

The chain is UPF0227 protein YE1706 from Yersinia enterocolitica serotype O:8 / biotype 1B (strain NCTC 13174 / 8081).